The following is a 389-amino-acid chain: Succinate--CoA ligase [ADP-forming] subunit beta (389 aa).

One can recognise an ATP-grasp domain in the interval 9–244; the sequence is KQLLAEYGIP…KTQEDETEVT (236 aa). ATP is bound by residues Lys-46, 53 to 55, Gly-102, and Glu-107; that span reads GRG. The Mg(2+) site is built by Asn-199 and Asp-213. Substrate-binding positions include Asn-264 and 321 to 323; that span reads GIV.

It belongs to the succinate/malate CoA ligase beta subunit family. Heterotetramer of two alpha and two beta subunits. Mg(2+) serves as cofactor.

It catalyses the reaction succinate + ATP + CoA = succinyl-CoA + ADP + phosphate. The enzyme catalyses GTP + succinate + CoA = succinyl-CoA + GDP + phosphate. It participates in carbohydrate metabolism; tricarboxylic acid cycle; succinate from succinyl-CoA (ligase route): step 1/1. Succinyl-CoA synthetase functions in the citric acid cycle (TCA), coupling the hydrolysis of succinyl-CoA to the synthesis of either ATP or GTP and thus represents the only step of substrate-level phosphorylation in the TCA. The beta subunit provides nucleotide specificity of the enzyme and binds the substrate succinate, while the binding sites for coenzyme A and phosphate are found in the alpha subunit. The protein is Succinate--CoA ligase [ADP-forming] subunit beta of Xanthomonas campestris pv. campestris (strain 8004).